The primary structure comprises 78 residues: MANIKSAIKRAELNVKQNEKNSAQKSAMRTAIKAFEANPSEELFRAASSAIDKAETKGLIHKNKASRDKARLSAKLAK.

It belongs to the bacterial ribosomal protein bS20 family.

Its function is as follows. Binds directly to 16S ribosomal RNA. This is Small ribosomal subunit protein bS20 from Streptococcus pneumoniae serotype 2 (strain D39 / NCTC 7466).